The primary structure comprises 497 residues: MORN repeat-containing protein 1 (497 aa).

The disordered stretch occupies residues Met-1–Tyr-27. MORN repeat units follow at residues Tyr-39–Tyr-61, Tyr-62–Asp-84, Phe-86–Cys-108, Tyr-109–Val-131, Tyr-132–Lys-154, Tyr-155–Thr-177, and Tyr-178–Thr-200. Disordered stretches follow at residues Gly-393 to Glu-425 and Gln-468 to Arg-497.

The chain is MORN repeat-containing protein 1 (MORN1) from Homo sapiens (Human).